The chain runs to 112 residues: uncharacterized protein (112 aa).

The next 2 helical transmembrane spans lie at 33-53 (IIGI…MIIF) and 69-89 (MNNI…HITV).

It localises to the membrane. This is an uncharacterized protein from Saccharomyces cerevisiae (strain ATCC 204508 / S288c) (Baker's yeast).